A 258-amino-acid chain; its full sequence is Phosphoadenosine 5'-phosphosulfate reductase (258 aa).

The active-site Nucleophile; cysteine thiosulfonate intermediate is Cys-244.

The protein belongs to the PAPS reductase family. CysH subfamily.

The protein resides in the cytoplasm. The catalysed reaction is [thioredoxin]-disulfide + sulfite + adenosine 3',5'-bisphosphate + 2 H(+) = [thioredoxin]-dithiol + 3'-phosphoadenylyl sulfate. It functions in the pathway sulfur metabolism; hydrogen sulfide biosynthesis; sulfite from sulfate: step 3/3. Its function is as follows. Catalyzes the formation of sulfite from phosphoadenosine 5'-phosphosulfate (PAPS) using thioredoxin as an electron donor. The chain is Phosphoadenosine 5'-phosphosulfate reductase from Vibrio vulnificus (strain YJ016).